A 476-amino-acid chain; its full sequence is Ataxin-10 (476 aa).

Position 10 is an omega-N-methylarginine (Arg10). Phosphoserine is present on residues Ser13 and Ser78. Thr83 is modified (phosphothreonine). Ser431 is modified (phosphoserine).

It belongs to the ataxin-10 family. As to quaternary structure, homooligomer. Interacts with GNB2. Interacts with IQCB1. Interacts with OGT. Polyubiquitinated. Post-translationally, phosphorylation at Ser-13 by AURKB promotes the association of ATXN10 with PLK1. Phosphorylation at Ser-78 and Thr-83 by PLK1 may play a role in the regulation of cytokinesis and may stimulate the proteasome-mediated degradation of ATXN10.

It localises to the cytoplasm. Its subcellular location is the perinuclear region. The protein localises to the midbody. The protein resides in the cytoskeleton. It is found in the cilium basal body. It localises to the microtubule organizing center. Its subcellular location is the centrosome. The protein localises to the centriole. In terms of biological role, may play a role in the regulation of cytokinesis. May play a role in signaling by stimulating protein glycosylation. Induces neuritogenesis by activating the Ras-MAP kinase pathway and is necessary for the survival of cerebellar neurons. Does not appear to play a major role in ciliogenesis. The chain is Ataxin-10 (ATXN10) from Pongo abelii (Sumatran orangutan).